Reading from the N-terminus, the 292-residue chain is Medium chain reductase/dehydrogenase ucsI (292 aa).

Cysteine 43 is a Zn(2+) binding site. Tyrosine 49 is a binding site for substrate. Zn(2+) is bound by residues histidine 65 and glutamate 66. NAD(+)-binding positions include 184–189 (GCGPVG), aspartate 208, arginine 213, and 276–278 (IGA).

It belongs to the zinc-containing alcohol dehydrogenase family. It depends on Zn(2+) as a cofactor.

It functions in the pathway mycotoxin biosynthesis. In terms of biological role, medium chain reductase/dehydrogenase; part of the gene cluster that mediates the biosynthesis of UCS1025A, a member of the pyrrolizidinone family that acts as a strong telomerase inhibitor and displays potent antibacterial and antitumor properties. These compounds share a hemiaminal-containing pyrrolizidinone core fused with a gamma-lactone, giving a furopyrrolizidine that is connected to a decalin fragment. The polyketide synthase module (PKS) of the PKS-NRPS ucsA is responsible for the synthesis of the polyketide backbone via the condensation of an acetyl-CoA starter unit with 6 malonyl-CoA units. The downstream nonribosomal peptide synthetase (NRPS) module then amidates the carboxyl end of the polyketide with a 2S,3S-methylproline derived from L-isoleucine by the 2-oxoglutarate-dependent dioxygenase ucsF which converts L-isoleucine to (4S,5S)-4-methylpyrroline-5-carboxylate that is further converted to 2S,3S-methylproline by the pyrroline-5-carboxylate reductase ucsG. Reductive release of the completed aminoacyl polyketide from the assembly line can form the 3-pyrrolin-2-one structure via an intramolecular Knoevenagel reaction. Because ucsA lacks a designated enoylreductase (ER) domain, the required activity is provided the enoyl reductase ucsL. This keto acyclic precursor is the substrate of the Diels-Alderase ucsH, that catalyzes the Diels-Alder cycloaddition. Oxidation of the 3S-methyl group to a carboxylate by the cytochrome P450 monooxygenase ucsK allows an oxa-Michael cyclization that might involve the reductase/dehydrogenase ucsI and which furnishes the furopyrrolizidine. The oxidase ucsJ likely plays a critical role in stereoselective reduction of the C5-C6 double bond to afford the required R-configured carboxylate group. Further enolization and oxidation at C5 by an unidentified enzyme affords the last intermediate that can undergo oxa-Michael cyclization to yield UCS1025A. The chain is Medium chain reductase/dehydrogenase ucsI from Acremonium sp.